The following is a 381-amino-acid chain: Creatine kinase M-type (381 aa).

In terms of domain architecture, Phosphagen kinase N-terminal spans 11–98 (KLNYSAAEEF…FDPVIEDRHG (88 aa)). The Phosphagen kinase C-terminal domain occupies 125–367 (YVLSSRVRTG…KLMVEMEKRL (243 aa)). ATP-binding positions include 128-132 (SSRVR), His191, Arg236, Arg292, 320-325 (RGTGGV), and Asp335.

It belongs to the ATP:guanido phosphotransferase family. As to quaternary structure, dimer of identical or non-identical chains. With MM being the major form in skeletal muscle and myocardium, MB existing in myocardium, and BB existing in many tissues, especially brain.

It is found in the cytoplasm. The catalysed reaction is creatine + ATP = N-phosphocreatine + ADP + H(+). Its function is as follows. Reversibly catalyzes the transfer of phosphate between ATP and various phosphogens (e.g. creatine phosphate). Creatine kinase isoenzymes play a central role in energy transduction in tissues with large, fluctuating energy demands, such as skeletal muscle, heart, brain and spermatozoa. This is Creatine kinase M-type from Tetronarce californica (Pacific electric ray).